The sequence spans 674 residues: Sodium/myo-inositol cotransporter 2 (674 aa).

Over 1 to 27 the chain is Extracellular; the sequence is MESSPSSPQPTQSDPLAVFPQRTLEPA. Residues 28–48 form a helical membrane-spanning segment; sequence DIAVLVLYFLFVLAVGLWSTV. Residues 49-56 are Cytoplasmic-facing; the sequence is KTRRDTVK. A helical transmembrane segment spans residues 57-77; sequence GYFLAGGDMVWWPVGASLFAS. The Extracellular segment spans residues 78–102; it reads NVGSGHFVGLAGSGAAAGLSVTAYE. A helical membrane pass occupies residues 103 to 123; the sequence is FNGIFSVLMLAWIFLPIYIAG. At 124–140 the chain is on the cytoplasmic side; it reads QVTTMPEYLRKRFGGSR. Residues 141-161 traverse the membrane as a helical segment; that stretch reads IPITLAVLYLFIYIFTKISVD. Topologically, residues 162 to 180 are extracellular; sequence MYAGAIFIQQSLHLNLYLA. The chain crosses the membrane as a helical span at residues 181–201; it reads IVGLLAITALYTIAGGLAAVI. Residues 202–208 are Cytoplasmic-facing; that stretch reads YTDALQT. The chain crosses the membrane as a helical span at residues 209–229; sequence LIMLIGALTLMGYSFAAVGGM. At 230–272 the chain is on the extracellular side; the sequence is EGLKEKYFLALASNRSGNSSCGLPREDAFHIFRDPLTSDLPWP. Residues 273-293 form a helical membrane-spanning segment; sequence GILFGMSIPSLWYWCTDQVIV. The Cytoplasmic portion of the chain corresponds to 294–308; sequence QRTLAAKNLSHAKGG. Residues 309-329 traverse the membrane as a helical segment; it reads SLMAAYLKVLPLFIMVFPGMV. The Extracellular portion of the chain corresponds to 330-374; sequence SRVLFPDQVACADPEICQKVCSNPAGCSDIAYPKLVLELLPMGLR. Residues 375 to 397 form a helical membrane-spanning segment; sequence GLMMAVMVAALMSSLTSIFNSAS. At 398–418 the chain is on the cytoplasmic side; that stretch reads TIFTMDLWNHLRPRASERELM. The helical transmembrane segment at 419–439 threads the bilayer; sequence IVGRVFVLLLVLVSILWIPVV. The Extracellular segment spans residues 440–446; it reads QASQGGQ. Residues 447–467 traverse the membrane as a helical segment; that stretch reads LFIYIQSISSYLQPPVAVVFI. The Cytoplasmic portion of the chain corresponds to 468–479; it reads MGCFWKRTNEKG. The chain crosses the membrane as a helical span at residues 480–500; the sequence is AFSGLILGLLLGLVRLVLDFI. Residues 501–518 are Extracellular-facing; it reads YPQPRCDQPDERPAVVRD. Residues 519 to 539 form a helical membrane-spanning segment; sequence VHYLYFSMILSSVTLVTVSTV. Residues 540-653 lie on the Cytoplasmic side of the membrane; that stretch reads SWCTAPPTQE…SLEEIPLVKT (114 aa). The helical transmembrane segment at 654-674 threads the bilayer; that stretch reads LLDINLIVCISCAIFLWGYFA.

Belongs to the sodium:solute symporter (SSF) (TC 2.A.21) family.

Its subcellular location is the membrane. The protein localises to the apical cell membrane. It carries out the reaction myo-inositol(out) + 2 Na(+)(out) = myo-inositol(in) + 2 Na(+)(in). The enzyme catalyses 1D-chiro-inositol(out) + 2 Na(+)(out) = 1D-chiro-inositol(in) + 2 Na(+)(in). It catalyses the reaction D-glucose(out) + 2 Na(+)(out) = D-glucose(in) + 2 Na(+)(in). The catalysed reaction is D-xylose(out) + 2 Na(+)(out) = D-xylose(in) + 2 Na(+)(in). Its activity is regulated as follows. MI transport activity inhibited by D-chiro-inositol (DCI), phlorizin (Pz) and sodium (Na(+)). Insulin increases D-chiro-inositol uptake. In terms of biological role, involved in the sodium-dependent cotransport of myo-inositol (MI) with a Na(+):MI stoichiometry of 2:1. Exclusively responsible for apical MI transport and absorption in intestine. Can also transport D-chiro-inositol (DCI) but not L-fucose. Exhibits stereospecific cotransport of both D-glucose and D-xylose. May induce apoptosis through the TNF-alpha, PDCD1 pathway. May play a role in the regulation of MI concentration in serum, involving reabsorption in at least the proximal tubule of the kidney. The chain is Sodium/myo-inositol cotransporter 2 from Sus scrofa (Pig).